Consider the following 415-residue polypeptide: Dibenzothiophene monooxygenase (415 aa).

FMN-binding positions include Y94, 127 to 132 (NASSEN), 157 to 161 (KHFSS), R280, 365 to 366 (IG), and T387. A lid loop region spans residues 129–140 (SSENNSHILDWK).

This sequence belongs to the DszC flavin monooxygenase family. In terms of assembly, homotetramer.

The protein resides in the cytoplasm. The enzyme catalyses dibenzothiophene + 2 FMNH2 + 2 O2 = dibenzothiophene 5,5-dioxide + 2 FMN + 2 H2O + 2 H(+). It carries out the reaction dibenzothiophene + FMNH2 + O2 = dibenzothiophene 5-oxide + FMN + H2O + H(+). The catalysed reaction is dibenzothiophene 5-oxide + FMNH2 + O2 = dibenzothiophene 5,5-dioxide + FMN + H2O + H(+). It participates in sulfur metabolism; dibenzothiophene degradation. With respect to regulation, inhibited at high concentrations of FMN or FAD. Its function is as follows. Catalyzes the first step of the '4S' desulfurization pathway that removes covalently bound sulfur from dibenzothiophene (DBT) without breaking carbon-carbon bonds. Sulfur dioxygenase which converts DBT to DBT-sulfone (DBTO2 or DBT 5,5-dioxide) probably in a stepwise manner. In addition to FMNH2 can also use FAD (although FAD is less efficient). This is Dibenzothiophene monooxygenase from Mycolicibacterium goodii (Mycobacterium goodii).